The following is a 505-amino-acid chain: T-cell activation GTPase-activating protein 1 (505 aa).

Disordered regions lie at residues 81–147 (DDSL…SESS), 160–212 (QQDR…DPFT), 242–293 (QGHI…QREI), 311–339 (RTSSIGSEKSKDFSRDQLQKDLRKESQLS), and 414–441 (KPSTAVPPVPSHHGGDLSEGTPGGHRLS). Positions 90–102 (SDVSTLQNDSAYD) are enriched in polar residues. The segment covering 203–212 (EGDEAEDPFT) has biased composition (acidic residues). Over residues 250–262 (SRSSPGESLGSSP) the composition is skewed to low complexity. Composition is skewed to basic and acidic residues over residues 283–292 (KTDKTKPQRE) and 318–336 (EKSKDFSRDQLQKDLRKES).

This Mus musculus (Mouse) protein is T-cell activation GTPase-activating protein 1 (Tagap1).